A 336-amino-acid polypeptide reads, in one-letter code: Glycerol-3-phosphate dehydrogenase [NAD(P)+] (336 aa).

NADPH-binding residues include S11, W12, R32, R33, and K110. Sn-glycerol 3-phosphate contacts are provided by K110 and G140. A144 is a binding site for NADPH. K195, D248, S258, R259, and N260 together coordinate sn-glycerol 3-phosphate. K195 serves as the catalytic Proton acceptor. R259 contacts NADPH. NADPH is bound by residues V284 and E286.

This sequence belongs to the NAD-dependent glycerol-3-phosphate dehydrogenase family.

It is found in the cytoplasm. The enzyme catalyses sn-glycerol 3-phosphate + NAD(+) = dihydroxyacetone phosphate + NADH + H(+). It carries out the reaction sn-glycerol 3-phosphate + NADP(+) = dihydroxyacetone phosphate + NADPH + H(+). It participates in membrane lipid metabolism; glycerophospholipid metabolism. In terms of biological role, catalyzes the reduction of the glycolytic intermediate dihydroxyacetone phosphate (DHAP) to sn-glycerol 3-phosphate (G3P), the key precursor for phospholipid synthesis. In Nocardia farcinica (strain IFM 10152), this protein is Glycerol-3-phosphate dehydrogenase [NAD(P)+].